The primary structure comprises 127 residues: Small ribosomal subunit protein uS11 (127 aa).

It belongs to the universal ribosomal protein uS11 family. In terms of assembly, part of the 30S ribosomal subunit. Interacts with proteins S7 and S18. Binds to IF-3.

Functionally, located on the platform of the 30S subunit, it bridges several disparate RNA helices of the 16S rRNA. Forms part of the Shine-Dalgarno cleft in the 70S ribosome. The chain is Small ribosomal subunit protein uS11 from Rickettsia prowazekii (strain Madrid E).